Here is a 484-residue protein sequence, read N- to C-terminus: Glutamate--tRNA ligase (484 aa).

The 'HIGH' region motif lies at 11 to 21; sequence PSPTGLLHIGN. The short motif at 255-259 is the 'KMSKS' region element; sequence KLSKR. An ATP-binding site is contributed by lysine 258.

This sequence belongs to the class-I aminoacyl-tRNA synthetase family. Glutamate--tRNA ligase type 1 subfamily. Monomer.

The protein resides in the cytoplasm. The catalysed reaction is tRNA(Glu) + L-glutamate + ATP = L-glutamyl-tRNA(Glu) + AMP + diphosphate. Its function is as follows. Catalyzes the attachment of glutamate to tRNA(Glu) in a two-step reaction: glutamate is first activated by ATP to form Glu-AMP and then transferred to the acceptor end of tRNA(Glu). This chain is Glutamate--tRNA ligase, found in Streptococcus agalactiae serotype III (strain NEM316).